A 738-amino-acid polypeptide reads, in one-letter code: Polyribonucleotide nucleotidyltransferase (738 aa).

Mg(2+)-binding residues include D528 and D534. Residues 594–653 (PRVVRVKIPVQKIGELIGPKGKVINSIQDETGAEISIEDDGTVYIGSSQADSSEKAVAMV) enclose the KH domain. The S1 motif domain occupies 665-737 (GSQFLGTVVK…DRGKLCLVAV (73 aa)).

It belongs to the polyribonucleotide nucleotidyltransferase family. Mg(2+) serves as cofactor.

The protein resides in the cytoplasm. The enzyme catalyses RNA(n+1) + phosphate = RNA(n) + a ribonucleoside 5'-diphosphate. Functionally, involved in mRNA degradation. Catalyzes the phosphorolysis of single-stranded polyribonucleotides processively in the 3'- to 5'-direction. The chain is Polyribonucleotide nucleotidyltransferase from Tropheryma whipplei (strain Twist) (Whipple's bacillus).